The following is a 280-amino-acid chain: MQEVISYIQKAVLEISNALKFPDTSYSQNQNFTGDTQLKFDVLSDGIITKTLSQCSSIKAIISEEKDEILTLNERANFIVAYDPLDGSSLMDVNFAIGSIFAIYEEKASAKNLRAALYSMYGARLELVICKDQPKLYRLNANNEFIFIKDLKMNEKGKINATGGTQKFWEEKHAKFIKSLFDEGYRLRYSGAMVSDINQILLKGGGIFSYPATQDAPNGKLRAFFEVFPLAFIIEKAGGKTTNGKNHSLLELEFDKIHATTPCFFGSEYEISKLLKAYNE.

Residues Glu64, Asp83, Leu85, and Asp86 each contribute to the Mg(2+) site. Residues 86 to 89 (DGSS), Tyr189, and Lys220 each bind substrate. Glu226 is a binding site for Mg(2+).

The protein belongs to the FBPase class 1 family. Homotetramer. Mg(2+) is required as a cofactor.

It localises to the cytoplasm. It carries out the reaction beta-D-fructose 1,6-bisphosphate + H2O = beta-D-fructose 6-phosphate + phosphate. It functions in the pathway carbohydrate biosynthesis; gluconeogenesis. This Campylobacter jejuni subsp. jejuni serotype O:6 (strain 81116 / NCTC 11828) protein is Fructose-1,6-bisphosphatase class 1.